Here is a 427-residue protein sequence, read N- to C-terminus: Flotillin-1 (427 aa).

Serine 19, serine 163, and serine 385 each carry phosphoserine. At threonine 387 the chain carries Phosphothreonine.

Belongs to the band 7/mec-2 family. Flotillin subfamily. In terms of assembly, heterooligomeric complex of flotillin-1 and flotillin-2 and caveolin-1 and caveolin-2. Interacts with ECPAS.

It localises to the cell membrane. The protein resides in the endosome. It is found in the membrane. Its subcellular location is the caveola. The protein localises to the melanosome. It localises to the membrane raft. In terms of biological role, may act as a scaffolding protein within caveolar membranes, functionally participating in formation of caveolae or caveolae-like vesicles. This chain is Flotillin-1 (FLOT1), found in Sus scrofa (Pig).